The primary structure comprises 361 residues: Methionine import ATP-binding protein MetN (361 aa).

Positions 22–257 (VRLIDVKRRF…PQTDITRSLL (236 aa)) constitute an ABC transporter domain. 54-61 (GRSGAGKS) contributes to the ATP binding site.

Belongs to the ABC transporter superfamily. Methionine importer (TC 3.A.1.24) family. As to quaternary structure, the complex is composed of two ATP-binding proteins (MetN), two transmembrane proteins (MetI) and a solute-binding protein (MetQ).

Its subcellular location is the cell inner membrane. The catalysed reaction is L-methionine(out) + ATP + H2O = L-methionine(in) + ADP + phosphate + H(+). The enzyme catalyses D-methionine(out) + ATP + H2O = D-methionine(in) + ADP + phosphate + H(+). Functionally, part of the ABC transporter complex MetNIQ involved in methionine import. Responsible for energy coupling to the transport system. The polypeptide is Methionine import ATP-binding protein MetN (Rhizobium etli (strain ATCC 51251 / DSM 11541 / JCM 21823 / NBRC 15573 / CFN 42)).